The chain runs to 225 residues: UPF0173 metal-dependent hydrolase Tneu_1348 (225 aa).

The protein belongs to the UPF0173 family.

The polypeptide is UPF0173 metal-dependent hydrolase Tneu_1348 (Pyrobaculum neutrophilum (strain DSM 2338 / JCM 9278 / NBRC 100436 / V24Sta) (Thermoproteus neutrophilus)).